A 617-amino-acid chain; its full sequence is Dihydroxy-acid dehydratase (617 aa).

Aspartate 81 is a binding site for Mg(2+). Residue cysteine 122 coordinates [2Fe-2S] cluster. Aspartate 123 and lysine 124 together coordinate Mg(2+). Lysine 124 carries the N6-carboxylysine modification. Cysteine 195 provides a ligand contact to [2Fe-2S] cluster. Position 491 (glutamate 491) interacts with Mg(2+). The Proton acceptor role is filled by serine 517.

It belongs to the IlvD/Edd family. In terms of assembly, homodimer. [2Fe-2S] cluster is required as a cofactor. It depends on Mg(2+) as a cofactor.

The enzyme catalyses (2R)-2,3-dihydroxy-3-methylbutanoate = 3-methyl-2-oxobutanoate + H2O. It carries out the reaction (2R,3R)-2,3-dihydroxy-3-methylpentanoate = (S)-3-methyl-2-oxopentanoate + H2O. The protein operates within amino-acid biosynthesis; L-isoleucine biosynthesis; L-isoleucine from 2-oxobutanoate: step 3/4. It participates in amino-acid biosynthesis; L-valine biosynthesis; L-valine from pyruvate: step 3/4. Its function is as follows. Functions in the biosynthesis of branched-chain amino acids. Catalyzes the dehydration of (2R,3R)-2,3-dihydroxy-3-methylpentanoate (2,3-dihydroxy-3-methylvalerate) into 2-oxo-3-methylpentanoate (2-oxo-3-methylvalerate) and of (2R)-2,3-dihydroxy-3-methylbutanoate (2,3-dihydroxyisovalerate) into 2-oxo-3-methylbutanoate (2-oxoisovalerate), the penultimate precursor to L-isoleucine and L-valine, respectively. This chain is Dihydroxy-acid dehydratase, found in Caulobacter vibrioides (strain ATCC 19089 / CIP 103742 / CB 15) (Caulobacter crescentus).